We begin with the raw amino-acid sequence, 788 residues long: Multi-functional prenyltransferase ltmE (788 aa).

Substrate-binding residues include lysine 18 and histidine 51. Residue aspartate 58 participates in Mg(2+) binding. 6 residues coordinate substrate: arginine 67, lysine 151, threonine 152, glutamine 182, asparagine 189, and lysine 199. Residues 283-337 are disordered; that stretch reads DTLDGDDLTRPSTITQHEQDDHVDRAAIDAKSDASGSSNKSLTPPETAPTTDTLS. A compositionally biased stretch (basic and acidic residues) spans 299 to 314; it reads HEQDDHVDRAAIDAKS. Residues 316–337 are compositionally biased toward polar residues; the sequence is ASGSSNKSLTPPETAPTTDTLS. 404-405 serves as a coordination point for L-tryptophan; that stretch reads MA. Positions 427, 599, 601, 603, and 687 each coordinate substrate.

This sequence in the N-terminal section; belongs to the FPP/GGPP synthase family. The protein in the C-terminal section; belongs to the tryptophan dimethylallyltransferase family. The cofactor is Mg(2+).

Its pathway is secondary metabolite biosynthesis. In terms of biological role, multi-functional prenyltransferase; part of the gene cluster that mediates the biosynthesis of lolitrems, indole-diterpene mycotoxins that are potent tremorgens in mammals, and are synthesized by clavicipitaceous fungal endophytes in association with their grass hosts. The geranylgeranyl diphosphate (GGPP) synthase ltmG is proposed to catalyze the first step in lolitrem biosynthesis. LtmG catalyzes a series of iterative condensations of isopentenyl diphosphate (IPP) with dimethylallyl diphosphate (DMAPP), geranyl diphosphate (GPP), and farnesyl diphosphate (FPP), to form GGPP. GGPP then condenses with indole-3-glycerol phosphate to form 3-geranylgeranylindole, an acyclic intermediate, to be incorporated into paxilline. Either ltmG or ltmC could be responsible for this step, as both are putative prenyl transferases. The FAD-dependent monooxygenase ltmM then catalyzes the epoxidation of the two terminal alkenes of the geranylgeranyl moiety, which is subsequently cyclized by ltmB, to paspaline. The cytochrome P450 monooxygenases ltmQ and ltmP can sequentially oxidize paspaline to terpendole E and terpendole F. Alternatively, ltmP converts paspaline to an intermediate which is oxidized by ltmQ to terpendole F. LtmF, ltmK, ltmE and ltmJ appear to be unique to the epichloe endophytes. The prenyltransferase ltmF is involved in the 27-hydroxyl-O-prenylation. The cytochrome P450 monooxygenase ltmK is required for the oxidative acetal ring formation. The multi-functional prenyltransferase ltmE is required for C20- and C21-prenylations of the indole ring of paspalanes and acts together with the cytochrome P450 monooxygenase ltmJ to yield lolitremanes by multiple oxidations and ring closures. The stereoisomer pairs of lolitriol and lolitrem N or lolitrem B and lolitrem F may be attributed to variations in the way in which ring closure can occur under the action of ltmJ. While the major product of this pathway is lolitrem B, the prenyl transferases and cytochrome P450 monooxygenases identified in this pathway have a remarkable versatility in their regio- and stereo-specificities to generate a diverse range of metabolites that are products of a metabolic grid rather than a linear pathway. In Epichloe festucae var. lolii (Neotyphodium lolii), this protein is Multi-functional prenyltransferase ltmE.